A 125-amino-acid chain; its full sequence is Egg cell-secreted protein 1.2 (125 aa).

The first 22 residues, 1 to 22 (MASNTSFLFATIAILLVLNISG), serve as a signal peptide directing secretion.

Belongs to the plant egg cell-secreted peptide family. In terms of tissue distribution, restricted to female reproductive tissues, specifically accumulating in storage vesicles of the unfertilized egg cell.

The protein localises to the cytoplasmic vesicle. Its subcellular location is the secreted. In terms of biological role, involved in the regulation of gamete interactions during the double fertilization and to prevent multiple-pollen tube attraction; mediates the redistribution of the gamete fusogen HAP2/GCS1 to the cell surface after secretion upon sperm arrival. The sequence is that of Egg cell-secreted protein 1.2 (EC1.2) from Arabidopsis thaliana (Mouse-ear cress).